The following is a 210-amino-acid chain: Na(+)-translocating NADH-quinone reductase subunit D (210 aa).

6 consecutive transmembrane segments (helical) span residues 14-34 (PIIN…ALAV), 42-62 (LVMS…ISLI), 72-92 (IIVQ…VLQA), 96-116 (EIAK…IVMG), 131-151 (FMDG…VGFF), and 178-198 (NGLL…IWVI).

This sequence belongs to the NqrDE/RnfAE family. Composed of six subunits; NqrA, NqrB, NqrC, NqrD, NqrE and NqrF.

Its subcellular location is the cell inner membrane. The catalysed reaction is a ubiquinone + n Na(+)(in) + NADH + H(+) = a ubiquinol + n Na(+)(out) + NAD(+). In terms of biological role, NQR complex catalyzes the reduction of ubiquinone-1 to ubiquinol by two successive reactions, coupled with the transport of Na(+) ions from the cytoplasm to the periplasm. NqrA to NqrE are probably involved in the second step, the conversion of ubisemiquinone to ubiquinol. This chain is Na(+)-translocating NADH-quinone reductase subunit D, found in Shewanella denitrificans (strain OS217 / ATCC BAA-1090 / DSM 15013).